A 245-amino-acid chain; its full sequence is Biosynthetic peptidoglycan transglycosylase (245 aa).

A helical transmembrane segment spans residues 19–39 (IVYAGAVFAAAWLATQLFYFV).

Belongs to the glycosyltransferase 51 family.

Its subcellular location is the cell inner membrane. It carries out the reaction [GlcNAc-(1-&gt;4)-Mur2Ac(oyl-L-Ala-gamma-D-Glu-L-Lys-D-Ala-D-Ala)](n)-di-trans,octa-cis-undecaprenyl diphosphate + beta-D-GlcNAc-(1-&gt;4)-Mur2Ac(oyl-L-Ala-gamma-D-Glu-L-Lys-D-Ala-D-Ala)-di-trans,octa-cis-undecaprenyl diphosphate = [GlcNAc-(1-&gt;4)-Mur2Ac(oyl-L-Ala-gamma-D-Glu-L-Lys-D-Ala-D-Ala)](n+1)-di-trans,octa-cis-undecaprenyl diphosphate + di-trans,octa-cis-undecaprenyl diphosphate + H(+). Its pathway is cell wall biogenesis; peptidoglycan biosynthesis. Peptidoglycan polymerase that catalyzes glycan chain elongation from lipid-linked precursors. This chain is Biosynthetic peptidoglycan transglycosylase, found in Burkholderia multivorans (strain ATCC 17616 / 249).